The primary structure comprises 404 residues: Multidrug resistance protein MdtG (404 aa).

A run of 11 helical transmembrane segments spans residues L19–V39, L56–A76, L90–I110, A113–V133, T144–A164, P171–I191, L222–L242, I254–P274, I288–T308, F317–N337, and A376–L396.

The protein belongs to the major facilitator superfamily. DHA1 family. MdtG (TC 2.A.1.2.20) subfamily.

The protein resides in the cell inner membrane. In Salmonella agona (strain SL483), this protein is Multidrug resistance protein MdtG.